A 414-amino-acid chain; its full sequence is MMLGPEGGEGFVVKLRGLPWSCSVEDVQNFLSDCTIHDGVAGVHFIYTREGRQSGEAFVELESEDDVKLALKKDRESMGHRYIEVFKSHRTEMDWVLKHSGPNSADTANDGFVRLRGLPFGCTKEEIIQFFSGLEIVPNGITLPVDPEGKITGEAFVQFASQELAEKALGKHKERIGHRYIEVFKSSQEEVRSYSDPPLKFMSVQRPGPYDRPGTARRYIGIVKQAGLERMRSGAYSAGYGGYEEYSGLSDGYGFTTDLFGRDLSYCLSGMYDHRYGDGEFTVQSTTGHCVHMRGLPYKATENDIYNFFSPLNPVRVHIEIGPDGRVTGEADVEFATHEEAVAAMSKDRANMQHRYIELFLNSTTGASNGAYSSQMMQGMGVSTQSTYSGLESQSVSGCYGAGYGGQNSMGGYD.

M1 is modified (N-acetylmethionine). M2 is subject to N-acetylmethionine; in Heterogeneous nuclear ribonucleoprotein F, N-terminally processed. In terms of domain architecture, RRM 1 spans 11-90; sequence FVVKLRGLPW…RYIEVFKSHR (80 aa). Residue K72 forms a Glycyl lysine isopeptide (Lys-Gly) (interchain with G-Cter in SUMO) linkage. An interaction with RNA region spans residues 81 to 86; sequence RYIEVF. K87 participates in a covalent cross-link: Glycyl lysine isopeptide (Lys-Gly) (interchain with G-Cter in SUMO2). Phosphoserine is present on residues S104 and S161. In terms of domain architecture, RRM 2 spans 111–188; that stretch reads GFVRLRGLPF…RYIEVFKSSQ (78 aa). K167 participates in a covalent cross-link: Glycyl lysine isopeptide (Lys-Gly) (interchain with G-Cter in SUMO2). The segment at 179-184 is interaction with RNA; the sequence is RYIEVF. A Glycyl lysine isopeptide (Lys-Gly) (interchain with G-Cter in SUMO2) cross-link involves residue K185. Phosphoserine occurs at positions 187, 193, and 195. K200 is modified (N6-acetyllysine; alternate). K200 is covalently cross-linked (Glycyl lysine isopeptide (Lys-Gly) (interchain with G-Cter in SUMO2); alternate). Residue T215 is modified to Phosphothreonine. K224 bears the N6-acetyllysine; alternate mark. K224 is covalently cross-linked (Glycyl lysine isopeptide (Lys-Gly) (interchain with G-Cter in SUMO2); alternate). A Phosphoserine modification is found at S265. Positions 289 to 366 constitute an RRM 3 domain; the sequence is HCVHMRGLPY…IELFLNSTTG (78 aa). The tract at residues 355 to 360 is interaction with RNA; the sequence is RYIELF.

As to quaternary structure, identified in the spliceosome C complex. Interacts with AGO1, AGO2, TBP and TXNL4/DIM1. Sumoylated.

The protein localises to the nucleus. The protein resides in the nucleoplasm. Component of the heterogeneous nuclear ribonucleoprotein (hnRNP) complexes which provide the substrate for the processing events that pre-mRNAs undergo before becoming functional, translatable mRNAs in the cytoplasm. Plays a role in the regulation of alternative splicing events. Binds G-rich sequences in pre-mRNAs and keeps target RNA in an unfolded state. The sequence is that of Heterogeneous nuclear ribonucleoprotein F (HNRNPF) from Bos taurus (Bovine).